Consider the following 181-residue polypeptide: ATP-dependent protease subunit HslV (181 aa).

T7 is a catalytic residue. Residues A162, C165, and T168 each contribute to the Na(+) site.

This sequence belongs to the peptidase T1B family. HslV subfamily. A double ring-shaped homohexamer of HslV is capped on each side by a ring-shaped HslU homohexamer. The assembly of the HslU/HslV complex is dependent on binding of ATP.

Its subcellular location is the cytoplasm. It catalyses the reaction ATP-dependent cleavage of peptide bonds with broad specificity.. Its activity is regulated as follows. Allosterically activated by HslU binding. In terms of biological role, protease subunit of a proteasome-like degradation complex believed to be a general protein degrading machinery. The sequence is that of ATP-dependent protease subunit HslV from Coxiella burnetii (strain RSA 493 / Nine Mile phase I).